Consider the following 779-residue polypeptide: uncharacterized protein (779 aa).

[4Fe-4S] cluster contacts are provided by C72 and C75.

The protein belongs to the prokaryotic molybdopterin-containing oxidoreductase family. [4Fe-4S] cluster serves as cofactor. The cofactor is Mo-bis(molybdopterin guanine dinucleotide).

This is an uncharacterized protein from Mycobacterium bovis (strain ATCC BAA-935 / AF2122/97).